Consider the following 424-residue polypeptide: Adenylosuccinate synthetase 1 (424 aa).

GTP is bound by residues 12–18 (GDEGKGK) and 40–42 (GHT). The active-site Proton acceptor is the D13. D13 and G40 together coordinate Mg(2+). Residues 13–16 (DEGK), 38–41 (NAGH), T127, R141, T236, and R304 contribute to the IMP site. Residue H41 is the Proton donor of the active site. 300–306 (ARTGRPR) provides a ligand contact to substrate. GTP is bound by residues R306, 332 to 334 (KLD), and 413 to 415 (GVG).

Belongs to the adenylosuccinate synthetase family. In terms of assembly, homodimer. The cofactor is Mg(2+).

The protein resides in the cytoplasm. It carries out the reaction IMP + L-aspartate + GTP = N(6)-(1,2-dicarboxyethyl)-AMP + GDP + phosphate + 2 H(+). It functions in the pathway purine metabolism; AMP biosynthesis via de novo pathway; AMP from IMP: step 1/2. Functionally, plays an important role in the de novo pathway of purine nucleotide biosynthesis. Catalyzes the first committed step in the biosynthesis of AMP from IMP. This Methanosarcina acetivorans (strain ATCC 35395 / DSM 2834 / JCM 12185 / C2A) protein is Adenylosuccinate synthetase 1.